The chain runs to 347 residues: Probable ribonucleotide transport ATP-binding protein mkl (347 aa).

An ABC transporter domain is found at 16-252; the sequence is IEVKGLTKSF…DEPVVRQFLN (237 aa). An ATP-binding site is contributed by 48 to 55; sequence GPSGTGKS.

It belongs to the ABC transporter superfamily.

Functionally, not known, could be involved in the transport of ribonucleotides. In Mycobacterium leprae (strain TN), this protein is Probable ribonucleotide transport ATP-binding protein mkl (mkl).